We begin with the raw amino-acid sequence, 163 residues long: Nucleotide-binding protein RHA1_ro01989 (163 aa).

It belongs to the YajQ family.

In terms of biological role, nucleotide-binding protein. The chain is Nucleotide-binding protein RHA1_ro01989 from Rhodococcus jostii (strain RHA1).